The sequence spans 123 residues: Alpha-lactalbumin A (123 aa).

The C-type lysozyme domain occupies 1–123 (KQFTKCELSQ…KLEQWLCEEL (123 aa)). 4 cysteine pairs are disulfide-bonded: Cys6-Cys120, Cys28-Cys111, Cys61-Cys77, and Cys73-Cys91. The Ca(2+) site is built by Lys79, Asp82, Asp84, Asp87, and Asp88.

The protein belongs to the glycosyl hydrolase 22 family. Lactose synthase (LS) is a heterodimer of a catalytic component, beta1,4-galactosyltransferase (beta4Gal-T1) and a regulatory component, alpha-lactalbumin (LA). In terms of tissue distribution, mammary gland specific. Secreted in milk.

The protein localises to the secreted. Its function is as follows. Regulatory subunit of lactose synthase, changes the substrate specificity of galactosyltransferase in the mammary gland making glucose a good acceptor substrate for this enzyme. This enables LS to synthesize lactose, the major carbohydrate component of milk. In other tissues, galactosyltransferase transfers galactose onto the N-acetylglucosamine of the oligosaccharide chains in glycoproteins. This chain is Alpha-lactalbumin A, found in Equus caballus (Horse).